A 434-amino-acid polypeptide reads, in one-letter code: Protein maelstrom homolog (434 aa).

Positions 4-73 (RRASRNAYYF…AQGKDSGPSE (70 aa)) form a DNA-binding region, HMG box.

It belongs to the maelstrom family. Interacts with SMARCB1, SIN3B and DDX4. Interacts with piRNA-associated proteins TDRD1, PIWIL1 and PIWIL2. Interacts with Tex19.1 and, probably, Tex19.2. In terms of tissue distribution, testis-specific. Present in spermatocytes and round and early elongating spermatids.

The protein localises to the cytoplasm. Its subcellular location is the nucleus. Functionally, plays a central role during spermatogenesis by repressing transposable elements and preventing their mobilization, which is essential for the germline integrity. Acts via the piRNA metabolic process, which mediates the repression of transposable elements during meiosis by forming complexes composed of piRNAs and Piwi proteins and governs the methylation and subsequent repression of transposons. Its association with piP-bodies suggests a participation in the secondary piRNAs metabolic process. Required for the localization of germ-cell factors to the meiotic nuage. In Mus musculus (Mouse), this protein is Protein maelstrom homolog.